We begin with the raw amino-acid sequence, 317 residues long: 4-diphosphocytidyl-2-C-methyl-D-erythritol kinase (317 aa).

Residue Lys11 is part of the active site. An ATP-binding site is contributed by 99–109 (PVAAGLAGGST). Asp141 is an active-site residue.

This sequence belongs to the GHMP kinase family. IspE subfamily.

It catalyses the reaction 4-CDP-2-C-methyl-D-erythritol + ATP = 4-CDP-2-C-methyl-D-erythritol 2-phosphate + ADP + H(+). Its pathway is isoprenoid biosynthesis; isopentenyl diphosphate biosynthesis via DXP pathway; isopentenyl diphosphate from 1-deoxy-D-xylulose 5-phosphate: step 3/6. In terms of biological role, catalyzes the phosphorylation of the position 2 hydroxy group of 4-diphosphocytidyl-2C-methyl-D-erythritol. The chain is 4-diphosphocytidyl-2-C-methyl-D-erythritol kinase from Nostoc sp. (strain PCC 7120 / SAG 25.82 / UTEX 2576).